We begin with the raw amino-acid sequence, 143 residues long: Large ribosomal subunit protein uL11 (143 aa).

The protein belongs to the universal ribosomal protein uL11 family. Part of the ribosomal stalk of the 50S ribosomal subunit. Interacts with L10 and the large rRNA to form the base of the stalk. L10 forms an elongated spine to which L12 dimers bind in a sequential fashion forming a multimeric L10(L12)X complex. One or more lysine residues are methylated.

Functionally, forms part of the ribosomal stalk which helps the ribosome interact with GTP-bound translation factors. The chain is Large ribosomal subunit protein uL11 from Azotobacter vinelandii (strain DJ / ATCC BAA-1303).